The chain runs to 62 residues: Large ribosomal subunit protein bL28 (62 aa).

Positions 1-24 (MARKCVITGRKTKAGNNRSHAMNS) are disordered. Residues 14–24 (AGNNRSHAMNS) are compositionally biased toward polar residues.

Belongs to the bacterial ribosomal protein bL28 family.

The polypeptide is Large ribosomal subunit protein bL28 (Bacillus pumilus (strain SAFR-032)).